The chain runs to 391 residues: Phosphoglycerate kinase (391 aa).

Substrate-binding positions include 21–23 (DFN), Arg41, 64–67 (HLGR), Arg121, and Arg154. ATP contacts are provided by residues Lys205, Glu322, and 348 to 351 (GGDS).

Belongs to the phosphoglycerate kinase family. In terms of assembly, monomer.

The protein resides in the cytoplasm. It catalyses the reaction (2R)-3-phosphoglycerate + ATP = (2R)-3-phospho-glyceroyl phosphate + ADP. Its pathway is carbohydrate degradation; glycolysis; pyruvate from D-glyceraldehyde 3-phosphate: step 2/5. This Solibacter usitatus (strain Ellin6076) protein is Phosphoglycerate kinase.